We begin with the raw amino-acid sequence, 545 residues long: Leucine-rich repeat LGI family member 2 (545 aa).

The first 28 residues, 1–28 (MALRRGGCGALGLLLLLLGAACLIPRSA), serve as a signal peptide directing secretion. The LRRNT domain occupies 29 to 65 (QVRRLARCPATCSCTKESIICVGSSWVPRIVPGDISS). N70 carries N-linked (GlcNAc...) asparagine glycosylation. 3 LRR repeats span residues 86 to 107 (SLQL…AFAG), 110 to 131 (HLEY…AFRG), and 134 to 155 (DLTH…VFSD). The LRRCT domain occupies 167–217 (NKFECDCKAKWLYLWLKMTNSTVSDVLCIGPPEYQEKKLNDVTSFDYECTT). N-linked (GlcNAc...) asparagine glycosylation occurs at N186. EAR repeat units lie at residues 219 to 261 (DFVV…EWDH), 265 to 307 (NFRS…KYDE), 311 to 358 (KFVK…KWNS), 360 to 403 (GFYS…QWNK), 407 to 450 (KFVP…RWNS), 452 to 494 (QFVE…QWDK), and 498 to 540 (LFKK…EHII). A glycan (N-linked (GlcNAc...) asparagine) is linked at N271. N-linked (GlcNAc...) asparagine glycosylation is present at N402.

As to expression, brain, heart and placenta.

The protein resides in the secreted. Required for the development of soma-targeting inhibitory GABAergic synapses made by parvalbumin-positive basket cells. The sequence is that of Leucine-rich repeat LGI family member 2 (LGI2) from Homo sapiens (Human).